The sequence spans 118 residues: MICOS complex subunit MIC13 (118 aa).

Residues 1–7 (MVARVWS) are Mitochondrial matrix-facing. Residues 8-26 (LMRFLIKGSVAGGAVYLVY) traverse the membrane as a helical segment. Over 27 to 118 (DQELLGPSDK…GWEYVKARTK (92 aa)) the chain is Mitochondrial intermembrane.

It belongs to the MICOS complex subunit Mic13 family. Component of the mitochondrial contact site and cristae organizing system (MICOS) complex, composed of at least MICOS10/MIC10, CHCHD3/MIC19, CHCHD6/MIC25, APOO/MIC26, MICOS13/MIC13, APOOL/MIC27 and IMMT/MIC60. The complex associates with mitochondrial outer membrane proteins SAMM50, MTX1 and MTX2, and with HSPA9.

It is found in the mitochondrion inner membrane. Its function is as follows. Component of the MICOS complex, a large protein complex of the mitochondrial inner membrane that plays crucial roles in the maintenance of crista junctions, inner membrane architecture, and formation of contact sites to the outer membrane. Constituent of mature MICOS complex, it is required for the formation of cristae junction (CJ) and maintenance of cristae morphology. Required for the incorporation of MICOS10/MIC10 into the MICOS complex. The sequence is that of MICOS complex subunit MIC13 from Macaca fascicularis (Crab-eating macaque).